The chain runs to 265 residues: Phosphatidylglycerol--prolipoprotein diacylglyceryl transferase (265 aa).

The next 7 helical transmembrane spans lie at 17 to 37 (VAVR…VVLG), 57 to 77 (LLLY…VLFY), 89 to 109 (ILAV…VLVA), 127 to 147 (FIAP…FING), 176 to 196 (QLYQ…VFAA), 201 to 218 (LRAV…LRFV), and 233 to 253 (LVPG…VGLA). An a 1,2-diacyl-sn-glycero-3-phospho-(1'-sn-glycerol)-binding site is contributed by arginine 140.

Belongs to the Lgt family.

It is found in the cell inner membrane. The enzyme catalyses L-cysteinyl-[prolipoprotein] + a 1,2-diacyl-sn-glycero-3-phospho-(1'-sn-glycerol) = an S-1,2-diacyl-sn-glyceryl-L-cysteinyl-[prolipoprotein] + sn-glycerol 1-phosphate + H(+). It participates in protein modification; lipoprotein biosynthesis (diacylglyceryl transfer). Its function is as follows. Catalyzes the transfer of the diacylglyceryl group from phosphatidylglycerol to the sulfhydryl group of the N-terminal cysteine of a prolipoprotein, the first step in the formation of mature lipoproteins. The polypeptide is Phosphatidylglycerol--prolipoprotein diacylglyceryl transferase (Azoarcus sp. (strain BH72)).